We begin with the raw amino-acid sequence, 30 residues long: Bacteriocin SRCAM 37 (30 aa).

This sequence belongs to the bacteriocin class IIA/YGNGV family.

The protein resides in the secreted. Its function is as follows. Bacteriocin with antibacterial activity against C.jejuni. The sequence is that of Bacteriocin SRCAM 37 from Paenibacillus polymyxa (Bacillus polymyxa).